A 507-amino-acid chain; its full sequence is Iroquois-class homeodomain protein IRX-3 (507 aa).

The interval 19-39 is disordered; it reads RPGAAGGGGGGSSAGGRSGPG. Positions 22–39 are enriched in gly residues; the sequence is AAGGGGGGSSAGGRSGPG. The segment at residues 130–192 is a DNA-binding region (homeobox; TALE-type); it reads DPSRPKNATR…NARRRLKKEN (63 aa). Disordered stretches follow at residues 193–398 and 416–468; these read KMTW…AAAA and RPFP…SGTD. Acidic residues-rich tracts occupy residues 213–223 and 230–261; these read REEEDEEEDEE and EMEE…DLEN. Composition is skewed to pro residues over residues 314–342 and 418–428; these read APPP…PAPA and FPGPPAGPRPH. Phosphoserine occurs at positions 326 and 329. A compositionally biased stretch (low complexity) spans 436–460; that stretch reads APQHLLGLPGAAGHPAAAAAAYARP.

It belongs to the TALE/IRO homeobox family. Expressed by neural progenitor cells in discrete domains of the ventral neural tube. Also expressed in specific and overlapping patterns with Irx1 and Irx2 in the developing and adult metanephric kidney. In the adult metanephros, renal expression is confined to the S3 segment of the proximal tubule, in the loop of Henle.

It localises to the nucleus. Its function is as follows. Transcription factor involved in SHH-dependent neural patterning. Together with NKX2-2 and NKX6-1 acts to restrict the generation of motor neurons to the appropriate region of the neural tube. Belongs to the class I proteins of neuronal progenitor factors, which are repressed by SHH signals. Involved in the transcriptional repression of MNX1 in non-motor neuron cells. Acts as a regulator of energy metabolism. The sequence is that of Iroquois-class homeodomain protein IRX-3 (Irx3) from Mus musculus (Mouse).